The following is a 300-amino-acid chain: Protoheme IX farnesyltransferase (300 aa).

9 helical membrane-spanning segments follow: residues 24–44 (GLAI…IHEF), 46–66 (LETI…VGAS), 99–119 (AFTI…MINP), 122–142 (AMFG…LKTV), 145–165 (LSVF…WVAA), 176–196 (LFLI…WFLF), 220–240 (IVLY…GYTG), 244–264 (LTPV…VYAI), and 275–295 (AKTL…VYIL).

This sequence belongs to the UbiA prenyltransferase family. Protoheme IX farnesyltransferase subfamily.

Its subcellular location is the cell inner membrane. The catalysed reaction is heme b + (2E,6E)-farnesyl diphosphate + H2O = Fe(II)-heme o + diphosphate. It participates in porphyrin-containing compound metabolism; heme O biosynthesis; heme O from protoheme: step 1/1. Functionally, converts heme B (protoheme IX) to heme O by substitution of the vinyl group on carbon 2 of heme B porphyrin ring with a hydroxyethyl farnesyl side group. The polypeptide is Protoheme IX farnesyltransferase (Flavobacterium psychrophilum (strain ATCC 49511 / DSM 21280 / CIP 103535 / JIP02/86)).